A 664-amino-acid polypeptide reads, in one-letter code: E3 ubiquitin-protein ligase RNF139 (664 aa).

N-acetylalanine is present on Ala2. Helical transmembrane passes span 51 to 71, 85 to 105, 125 to 145, 154 to 174, 178 to 198, 293 to 313, 323 to 343, 356 to 376, 390 to 410, 420 to 440, 469 to 489, and 495 to 512; these read IVLQIFLRLLGIFVSSIVLIL, AFLLAATSVLVNYYASLHIDF, SLWMALIVLQLTFGIGYVTLL, LIILDLLVPVIGLITELPLHI, LVFTSSLILTLNTVLVLAVKL, GMSAVISSVAHYLGLGILAFI, LGFVAPVLFFILALQTGLSGL, MCLLLTAVLHFIHGMTDPVLM, FPVLFVSACLFILPVLLSYVL, LFAATAFCVELCLKVIVSLTV, SIIVFIFGVVMFGNGAYTMMF, and IRAFMMCLHAYFNIYLQA. The RING-type; atypical zinc finger occupies 547 to 586; sequence CAICYHEFTTSARITPCNHYFHALCLRKWLYIQDTCPMCH. Positions 599–610 are enriched in polar residues; the sequence is SNVSNNNGFTPP. The disordered stretch occupies residues 599–664; that stretch reads SNVSNNNGFT…AAEEFNDDTD (66 aa). The segment covering 616–628 has biased composition (basic and acidic residues); it reads EAVREAAAESDRE. A compositionally biased stretch (acidic residues) spans 629–639; it reads LNEDDSTDCDD. Ser634 carries the phosphoserine modification. Phosphothreonine is present on residues Thr635 and Thr663.

In terms of assembly, interacts with VHL. Interacts with MHC class I and HM13. Component of SCAP-SREBP complex composed of SREBF2, SCAP and RNF139; the complex hampers the interaction between SCAP and SEC24B, thereby reducing SREBF2 proteolytic processing. Interacts with SREBF2 (via C-terminal domain). Interacts with SCAP; the interaction inhibits the interaction of SCAP with SEC24B and hampering the ER to Golgi transport of the SCAP-SREBP complex. Interacts with SEC24B. Interacts with INSIG1 and INSIG2. Interacts with EIF3F and EIF3H; the interaction leads to protein translation inhibitions in a ubiquitination-dependent manner. Interacts with XBP1; the interaction induces ubiquitination and degradation of XBP1. Interacts with AUP1, AMFR and UBE2G2; interaction with AUP1 facilitates interaction of RNF139 with ubiquitin-conjugating enzyme UBE2G2 and ubiquitin ligase AMFR/gp78, leading to sterol-induced ubiquitination of HMGCR and its subsequent proteasomal degradation. Post-translationally, autoubiquitinated. Ubiquitination is induced by sterol and leads to ist degradation via the ubiquitin-proteasome pathway.

The protein resides in the endoplasmic reticulum membrane. It catalyses the reaction S-ubiquitinyl-[E2 ubiquitin-conjugating enzyme]-L-cysteine + [acceptor protein]-L-lysine = [E2 ubiquitin-conjugating enzyme]-L-cysteine + N(6)-ubiquitinyl-[acceptor protein]-L-lysine.. It functions in the pathway protein modification; protein ubiquitination. In terms of biological role, E3-ubiquitin ligase; acts as a negative regulator of cell proliferation through mechanisms involving G2/M arrest and cell death. Required for MHC class I ubiquitination in cells expressing the cytomegalovirus protein US2 before dislocation from the endoplasmic reticulum (ER). Affects SREBP processing by hindering the SREBP-SCAP complex translocation from the ER to the Golgi, thereby reducing SREBF2 target gene expression. Involved in the sterol-accelerated degradation of HMGCR. This is achieved through binding to INSIG1 and/or INSIG2 at the ER membrane. In addition, interaction of RNF139 with AUP1 facilitates interaction of RNF139 with ubiquitin-conjugating enzyme UBE2G2 and ubiquitin ligase AMFR, leading to ubiquitination of HMGCR. The ubiquitinated HMGCR is then released from the ER by the complex into the cytosol for subsequent destruction. Required for INSIG1 ubiquitination. May be required for EIF3 complex ubiquitination. This is E3 ubiquitin-protein ligase RNF139 (RNF139) from Pongo abelii (Sumatran orangutan).